A 242-amino-acid chain; its full sequence is Phosphoribosylaminoimidazole-succinocarboxamide synthase (242 aa).

Belongs to the SAICAR synthetase family.

The catalysed reaction is 5-amino-1-(5-phospho-D-ribosyl)imidazole-4-carboxylate + L-aspartate + ATP = (2S)-2-[5-amino-1-(5-phospho-beta-D-ribosyl)imidazole-4-carboxamido]succinate + ADP + phosphate + 2 H(+). The protein operates within purine metabolism; IMP biosynthesis via de novo pathway; 5-amino-1-(5-phospho-D-ribosyl)imidazole-4-carboxamide from 5-amino-1-(5-phospho-D-ribosyl)imidazole-4-carboxylate: step 1/2. This Cyanothece sp. (strain PCC 7425 / ATCC 29141) protein is Phosphoribosylaminoimidazole-succinocarboxamide synthase.